Consider the following 372-residue polypeptide: MAKIVVGLSGGVDSAVSAYLLKKAGHNVIAVFMRNWDSSLNNDFLGKKNEKNFTICPQEQDWLDAKVVAKQLNIPIFRIDFIKEYWDEVFSDLILKYQSGLTPNPDILCNKNIKFKHFLDYAQKVHNADFIAMGHYAKTDNGNLYAGADSLKDQSYFLGQLSKSQLQKTIFPLGNLLKSEVRKIANELGLINAKKKDSTGICFIGERKFTDFLQNYIPAQPGNIIDISTKKVLGKHIGIMYFTIGQRKGFGLSGMKEPYFVVGHNLKEKILYVSPQSEKKWLESDSLMAKNANFLSENFRNLDNLSAKFRYRQEAIPIRIEKIQDNSFWISYQKYQAITPGQQVVIYHQNQVILAGEIALLFRNGKKLDYLD.

Residues 7 to 14 and methionine 33 contribute to the ATP site; that span reads GLSGGVDS. Residues 104-106 are interaction with target base in tRNA; the sequence is NPD. Cysteine 109 (nucleophile) is an active-site residue. Cysteine 109 and cysteine 202 are disulfide-bonded. Glycine 134 contacts ATP. The tract at residues 152-154 is interaction with tRNA; that stretch reads KDQ. Catalysis depends on cysteine 202, which acts as the Cysteine persulfide intermediate. The segment at 310-311 is interaction with tRNA; the sequence is RY.

The protein belongs to the MnmA/TRMU family.

Its subcellular location is the cytoplasm. The enzyme catalyses S-sulfanyl-L-cysteinyl-[protein] + uridine(34) in tRNA + AH2 + ATP = 2-thiouridine(34) in tRNA + L-cysteinyl-[protein] + A + AMP + diphosphate + H(+). Catalyzes the 2-thiolation of uridine at the wobble position (U34) of tRNA, leading to the formation of s(2)U34. This Mesomycoplasma hyopneumoniae (strain 7448) (Mycoplasma hyopneumoniae) protein is tRNA-specific 2-thiouridylase MnmA.